A 511-amino-acid chain; its full sequence is 3-octaprenyl-4-hydroxybenzoate carboxy-lyase (511 aa).

N176 contributes to the Mn(2+) binding site. Prenylated FMN is bound by residues 179-181, 193-195, and 198-199; these read IYR, RWL, and RG. E242 contacts Mn(2+). D311 acts as the Proton donor in catalysis.

Belongs to the UbiD family. Homohexamer. Prenylated FMN is required as a cofactor. Requires Mn(2+) as cofactor.

It is found in the cell membrane. The catalysed reaction is a 4-hydroxy-3-(all-trans-polyprenyl)benzoate + H(+) = a 2-(all-trans-polyprenyl)phenol + CO2. It functions in the pathway cofactor biosynthesis; ubiquinone biosynthesis. In terms of biological role, catalyzes the decarboxylation of 3-octaprenyl-4-hydroxy benzoate to 2-octaprenylphenol, an intermediate step in ubiquinone biosynthesis. This chain is 3-octaprenyl-4-hydroxybenzoate carboxy-lyase, found in Laribacter hongkongensis (strain HLHK9).